Here is a 686-residue protein sequence, read N- to C-terminus: Tripartite terminase subunit 3 (686 aa).

The Walker A motif motif lies at 220 to 227 (IPRRHGKT). Positions 315 to 320 (LLFVDE) match the Walker B motif motif. Glu-320 (for ATPase activity) is an active-site residue. Catalysis depends on for nuclease activity residues Asp-474, Glu-546, and Asp-658.

The protein belongs to the herpesviridae TRM3 protein family. Interacts with the terminase subunits TRM1 and TRM2. Interacts with portal protein.

The protein localises to the host nucleus. Functionally, component of the molecular motor that translocates viral genomic DNA in empty capsid during DNA packaging. Forms a tripartite terminase complex together with TRM1 and TRM2 in the host cytoplasm. Once the complex reaches the host nucleus, it interacts with the capsid portal vertex. This portal forms a ring in which genomic DNA is translocated into the capsid. TRM3 carries an RNase H-like nuclease activity that plays an important role for the cleavage of concatemeric viral DNA into unit length genomes. The polypeptide is Tripartite terminase subunit 3 (Alcelaphine herpesvirus 1 (strain C500) (AlHV-1)).